The following is a 117-amino-acid chain: Large ribosomal subunit protein bL20 (117 aa).

Belongs to the bacterial ribosomal protein bL20 family.

Functionally, binds directly to 23S ribosomal RNA and is necessary for the in vitro assembly process of the 50S ribosomal subunit. It is not involved in the protein synthesizing functions of that subunit. This is Large ribosomal subunit protein bL20 from Trichlorobacter lovleyi (strain ATCC BAA-1151 / DSM 17278 / SZ) (Geobacter lovleyi).